The primary structure comprises 137 residues: SPbeta prophage-derived disulfide bond formation protein A (137 aa).

The first 25 residues, 1-25, serve as a signal peptide directing secretion; it reads MKKWIVLFLVLIAAAISIFVYVSTG. Positions 26-136 constitute a Thioredoxin domain; sequence SEKPFYNDIN…IEKFFDKNGD (111 aa). The cysteines at positions 58 and 61 are disulfide-linked.

It belongs to the thioredoxin family.

It is found in the secreted. Functionally, unknown; dispensable for production of the lantibiotic sublancin 168 and for competence for DNA uptake. The protein is SPbeta prophage-derived disulfide bond formation protein A (bdbA) of Bacillus subtilis (strain 168).